The sequence spans 199 residues: Pyridoxal 5'-phosphate synthase subunit PdxT (199 aa).

L-glutamine is bound at residue 47–49 (GES). C79 serves as the catalytic Nucleophile. Residues R106 and 133-134 (IR) contribute to the L-glutamine site. Active-site charge relay system residues include H169 and E171.

It belongs to the glutaminase PdxT/SNO family. As to quaternary structure, in the presence of PdxS, forms a dodecamer of heterodimers. Only shows activity in the heterodimer.

The enzyme catalyses aldehydo-D-ribose 5-phosphate + D-glyceraldehyde 3-phosphate + L-glutamine = pyridoxal 5'-phosphate + L-glutamate + phosphate + 3 H2O + H(+). It carries out the reaction L-glutamine + H2O = L-glutamate + NH4(+). The protein operates within cofactor biosynthesis; pyridoxal 5'-phosphate biosynthesis. In terms of biological role, catalyzes the hydrolysis of glutamine to glutamate and ammonia as part of the biosynthesis of pyridoxal 5'-phosphate. The resulting ammonia molecule is channeled to the active site of PdxS. This is Pyridoxal 5'-phosphate synthase subunit PdxT from Desulfitobacterium hafniense (strain Y51).